Here is a 145-residue protein sequence, read N- to C-terminus: 3-dehydroquinate dehydratase (145 aa).

Y23 (proton acceptor) is an active-site residue. The substrate site is built by N74, H80, and D87. H100 acts as the Proton donor in catalysis. Substrate is bound by residues 101–102 and R111; that span reads LS.

This sequence belongs to the type-II 3-dehydroquinase family. As to quaternary structure, homododecamer.

The enzyme catalyses 3-dehydroquinate = 3-dehydroshikimate + H2O. The protein operates within metabolic intermediate biosynthesis; chorismate biosynthesis; chorismate from D-erythrose 4-phosphate and phosphoenolpyruvate: step 3/7. Catalyzes a trans-dehydration via an enolate intermediate. The sequence is that of 3-dehydroquinate dehydratase from Halalkalibacterium halodurans (strain ATCC BAA-125 / DSM 18197 / FERM 7344 / JCM 9153 / C-125) (Bacillus halodurans).